The sequence spans 636 residues: Putative cysteine-rich receptor-like protein kinase 33 (636 aa).

A signal peptide spans 1-25 (MRKTKKISFLIFWVVLISIIGAISS). Gnk2-homologous domains follow at residues 26 to 128 (QQCN…NSSF) and 138 to 245 (YMEH…LYPF). Residues 26 to 266 (QQCNETGYFE…PGSKRNISVG (241 aa)) lie on the Extracellular side of the membrane. 10 N-linked (GlcNAc...) asparagine glycosylation sites follow: Asn29, Asn63, Asn105, Asn125, Asn149, Asn173, Asn185, Asn188, Asn250, and Asn262. A helical membrane pass occupies residues 267-287 (FFVAIVVATGVVISVLSTLVV). Over 288–636 (VLVCRKRKTD…DSLIDDLVPR (349 aa)) the chain is Cytoplasmic. A Protein kinase domain is found at 321 to 600 (FSKCNMLGQG…MMLTSNSITL (280 aa)). ATP contacts are provided by residues 327-335 (LGQGGFGEV) and Lys349. Phosphotyrosine is present on Tyr394. Asp446 functions as the Proton acceptor in the catalytic mechanism. Residue Ser450 is modified to Phosphoserine. Thr486 carries the post-translational modification Phosphothreonine. Tyr494 is modified (phosphotyrosine).

It belongs to the protein kinase superfamily. Ser/Thr protein kinase family. CRK subfamily.

It localises to the membrane. It carries out the reaction L-seryl-[protein] + ATP = O-phospho-L-seryl-[protein] + ADP + H(+). It catalyses the reaction L-threonyl-[protein] + ATP = O-phospho-L-threonyl-[protein] + ADP + H(+). This is Putative cysteine-rich receptor-like protein kinase 33 (CRK33) from Arabidopsis thaliana (Mouse-ear cress).